We begin with the raw amino-acid sequence, 516 residues long: uncharacterized protein (516 aa).

An N-terminal signal peptide occupies residues Met1–Thr17. Disordered stretches follow at residues Lys29 to Arg197 and Arg296 to Leu426. Residues Arg71 to Ser85 are compositionally biased toward basic and acidic residues. The segment covering Val122–Ser144 has biased composition (pro residues). The segment covering Pro145–Val155 has biased composition (low complexity). Residues Lys351 to Pro367 are compositionally biased toward basic and acidic residues. A compositionally biased stretch (low complexity) spans Ser394–Pro406. A compositionally biased stretch (basic and acidic residues) spans Ala415–Leu426.

This is an uncharacterized protein from Treponema pallidum (strain Nichols).